Reading from the N-terminus, the 382-residue chain is Methenyltetrahydrofolate synthase domain-containing protein (382 aa).

Residues 306-382 (TTVYLSDIPP…QAKCVSSQKM (77 aa)) form the RRM domain.

The protein is Methenyltetrahydrofolate synthase domain-containing protein (mthfsd) of Danio rerio (Zebrafish).